We begin with the raw amino-acid sequence, 281 residues long: Release factor glutamine methyltransferase (281 aa).

S-adenosyl-L-methionine is bound by residues 121-125, D144, and N188; that span reads GSGTG. Substrate is bound at residue 188-191; sequence NPPY.

Belongs to the protein N5-glutamine methyltransferase family. PrmC subfamily.

The catalysed reaction is L-glutaminyl-[peptide chain release factor] + S-adenosyl-L-methionine = N(5)-methyl-L-glutaminyl-[peptide chain release factor] + S-adenosyl-L-homocysteine + H(+). In terms of biological role, methylates the class 1 translation termination release factors RF1/PrfA and RF2/PrfB on the glutamine residue of the universally conserved GGQ motif. The sequence is that of Release factor glutamine methyltransferase from Aquifex aeolicus (strain VF5).